The primary structure comprises 182 residues: ATP synthase subunit delta (182 aa).

It belongs to the ATPase delta chain family. As to quaternary structure, F-type ATPases have 2 components, F(1) - the catalytic core - and F(0) - the membrane proton channel. F(1) has five subunits: alpha(3), beta(3), gamma(1), delta(1), epsilon(1). F(0) has three main subunits: a(1), b(2) and c(10-14). The alpha and beta chains form an alternating ring which encloses part of the gamma chain. F(1) is attached to F(0) by a central stalk formed by the gamma and epsilon chains, while a peripheral stalk is formed by the delta and b chains.

The protein resides in the cell membrane. Its function is as follows. F(1)F(0) ATP synthase produces ATP from ADP in the presence of a proton or sodium gradient. F-type ATPases consist of two structural domains, F(1) containing the extramembraneous catalytic core and F(0) containing the membrane proton channel, linked together by a central stalk and a peripheral stalk. During catalysis, ATP synthesis in the catalytic domain of F(1) is coupled via a rotary mechanism of the central stalk subunits to proton translocation. In terms of biological role, this protein is part of the stalk that links CF(0) to CF(1). It either transmits conformational changes from CF(0) to CF(1) or is implicated in proton conduction. In Lachnoclostridium phytofermentans (strain ATCC 700394 / DSM 18823 / ISDg) (Clostridium phytofermentans), this protein is ATP synthase subunit delta.